A 394-amino-acid chain; its full sequence is Cystathionine gamma-lyase (394 aa).

Residues 37-56 are disordered; the sequence is KQSSPANPIGTYEYSRSQNP. The substrate site is built by Arg52, Tyr104, and Arg109. Lys204 carries the N6-(pyridoxal phosphate)lysine modification. Glu334 contributes to the substrate binding site. A Phosphoserine modification is found at Ser362.

Belongs to the trans-sulfuration enzymes family. As to quaternary structure, homotetramer. It depends on pyridoxal 5'-phosphate as a cofactor.

It localises to the cytoplasm. It carries out the reaction L,L-cystathionine + H2O = 2-oxobutanoate + L-cysteine + NH4(+). The protein operates within amino-acid biosynthesis; L-cysteine biosynthesis; L-cysteine from L-homocysteine and L-serine: step 2/2. Catalyzes the production of cysteine from cystathionine in the reverse transsulfuration pathway for the biosynthesis of sulfur-containing amino acids cysteine and methionine. In this pathway, homocysteine sulfur is converted to cysteine sulfur. Also has cystathionine beta-lyase and cystathionine gamma-synthase activities in vitro. Cystathionine beta-lyase may be physiological, while cystathionine gamma-synthase activity is not, as the required substrate O-succinyl-L-homoserine(OSH) does not occur naturally in S.cerevisiae. This is Cystathionine gamma-lyase from Saccharomyces cerevisiae (strain ATCC 204508 / S288c) (Baker's yeast).